Consider the following 436-residue polypeptide: Methylenetetrahydrofolate--tRNA-(uracil-5-)-methyltransferase TrmFO (436 aa).

Position 9–14 (9–14 (GAGLAG)) interacts with FAD.

Belongs to the MnmG family. TrmFO subfamily. The cofactor is FAD.

The protein localises to the cytoplasm. It carries out the reaction uridine(54) in tRNA + (6R)-5,10-methylene-5,6,7,8-tetrahydrofolate + NADH + H(+) = 5-methyluridine(54) in tRNA + (6S)-5,6,7,8-tetrahydrofolate + NAD(+). It catalyses the reaction uridine(54) in tRNA + (6R)-5,10-methylene-5,6,7,8-tetrahydrofolate + NADPH + H(+) = 5-methyluridine(54) in tRNA + (6S)-5,6,7,8-tetrahydrofolate + NADP(+). In terms of biological role, catalyzes the folate-dependent formation of 5-methyl-uridine at position 54 (M-5-U54) in all tRNAs. This Ligilactobacillus salivarius (strain UCC118) (Lactobacillus salivarius) protein is Methylenetetrahydrofolate--tRNA-(uracil-5-)-methyltransferase TrmFO.